Consider the following 332-residue polypeptide: MSRILDNEIMGDEELVERTLRPQYLREYIGQDKVKDQLQIFIEAAKMRDEALDHVLLFGPPGLGKTTMAFVIANELGVNLKQTSGPVIEKAGDLVAILNELEPGDVLFIDEIHRLPMSVEEVLYSAMEDFYIDIMIGAGEGSRSVHLELPPFTLIGATTRAGMLSNPLRARFGITGHMEYYAHADLTEIVERTADIFEMEITHEAASELALRSRGTPRIANRLLKRVRDFAQIMGNGVIDDIITDKALTMLDVDHEGLDYVDQKILRTMIEMYSGGPVGLGTLSVNIAEERETVEDMYEPYLIQKGFIMRTRSGRVATAKAYEHLGYEYSEK.

Positions 1-181 (MSRILDNEIM…FGITGHMEYY (181 aa)) are large ATPase domain (RuvB-L). Residues L20, R21, G62, K65, T66, T67, 128-130 (EDF), R171, Y181, and R218 each bind ATP. T66 lines the Mg(2+) pocket. The tract at residues 182–252 (AHADLTEIVE…ITDKALTMLD (71 aa)) is small ATPAse domain (RuvB-S). A head domain (RuvB-H) region spans residues 255-332 (HEGLDYVDQK…EHLGYEYSEK (78 aa)). DNA-binding residues include R291, R310, R312, and R315.

The protein belongs to the RuvB family. Homohexamer. Forms an RuvA(8)-RuvB(12)-Holliday junction (HJ) complex. HJ DNA is sandwiched between 2 RuvA tetramers; dsDNA enters through RuvA and exits via RuvB. An RuvB hexamer assembles on each DNA strand where it exits the tetramer. Each RuvB hexamer is contacted by two RuvA subunits (via domain III) on 2 adjacent RuvB subunits; this complex drives branch migration. In the full resolvosome a probable DNA-RuvA(4)-RuvB(12)-RuvC(2) complex forms which resolves the HJ.

The protein localises to the cytoplasm. It catalyses the reaction ATP + H2O = ADP + phosphate + H(+). Functionally, the RuvA-RuvB-RuvC complex processes Holliday junction (HJ) DNA during genetic recombination and DNA repair, while the RuvA-RuvB complex plays an important role in the rescue of blocked DNA replication forks via replication fork reversal (RFR). RuvA specifically binds to HJ cruciform DNA, conferring on it an open structure. The RuvB hexamer acts as an ATP-dependent pump, pulling dsDNA into and through the RuvAB complex. RuvB forms 2 homohexamers on either side of HJ DNA bound by 1 or 2 RuvA tetramers; 4 subunits per hexamer contact DNA at a time. Coordinated motions by a converter formed by DNA-disengaged RuvB subunits stimulates ATP hydrolysis and nucleotide exchange. Immobilization of the converter enables RuvB to convert the ATP-contained energy into a lever motion, pulling 2 nucleotides of DNA out of the RuvA tetramer per ATP hydrolyzed, thus driving DNA branch migration. The RuvB motors rotate together with the DNA substrate, which together with the progressing nucleotide cycle form the mechanistic basis for DNA recombination by continuous HJ branch migration. Branch migration allows RuvC to scan DNA until it finds its consensus sequence, where it cleaves and resolves cruciform DNA. The sequence is that of Holliday junction branch migration complex subunit RuvB from Streptococcus pneumoniae serotype 2 (strain D39 / NCTC 7466).